Here is a 556-residue protein sequence, read N- to C-terminus: Formate--tetrahydrofolate ligase (556 aa).

65–72 (TSAGEGKT) is an ATP binding site.

This sequence belongs to the formate--tetrahydrofolate ligase family.

It carries out the reaction (6S)-5,6,7,8-tetrahydrofolate + formate + ATP = (6R)-10-formyltetrahydrofolate + ADP + phosphate. Its pathway is one-carbon metabolism; tetrahydrofolate interconversion. The protein is Formate--tetrahydrofolate ligase of Kosmotoga olearia (strain ATCC BAA-1733 / DSM 21960 / TBF 19.5.1).